The primary structure comprises 168 residues: Phosphopantetheine adenylyltransferase (168 aa).

Threonine 10 is a substrate binding site. ATP-binding positions include 10–11 (TF) and histidine 18. Residues lysine 42, leucine 74, and arginine 88 each coordinate substrate. Residues 89–91 (GLR), glutamate 99, and 124–130 (NSFISST) each bind ATP.

Belongs to the bacterial CoaD family. Homohexamer. Mg(2+) serves as cofactor.

The protein resides in the cytoplasm. The enzyme catalyses (R)-4'-phosphopantetheine + ATP + H(+) = 3'-dephospho-CoA + diphosphate. It participates in cofactor biosynthesis; coenzyme A biosynthesis; CoA from (R)-pantothenate: step 4/5. In terms of biological role, reversibly transfers an adenylyl group from ATP to 4'-phosphopantetheine, yielding dephospho-CoA (dPCoA) and pyrophosphate. This Shewanella frigidimarina (strain NCIMB 400) protein is Phosphopantetheine adenylyltransferase.